Here is a 208-residue protein sequence, read N- to C-terminus: NADH-quinone oxidoreductase subunit I 2 (208 aa).

4Fe-4S ferredoxin-type domains lie at 79–109 (ILVE…IEGK) and 119–148 (SVFN…QTDI). [4Fe-4S] cluster contacts are provided by Cys-88, Cys-91, Cys-94, Cys-98, Cys-128, Cys-131, Cys-134, and Cys-138.

Belongs to the complex I 23 kDa subunit family. In terms of assembly, NDH-1 is composed of 14 different subunits. Subunits NuoA, H, J, K, L, M, N constitute the membrane sector of the complex. Requires [4Fe-4S] cluster as cofactor.

The protein resides in the cell inner membrane. It carries out the reaction a quinone + NADH + 5 H(+)(in) = a quinol + NAD(+) + 4 H(+)(out). Its function is as follows. NDH-1 shuttles electrons from NADH, via FMN and iron-sulfur (Fe-S) centers, to quinones in the respiratory chain. The immediate electron acceptor for the enzyme in this species is believed to be ubiquinone. Couples the redox reaction to proton translocation (for every two electrons transferred, four hydrogen ions are translocated across the cytoplasmic membrane), and thus conserves the redox energy in a proton gradient. In Aquifex aeolicus (strain VF5), this protein is NADH-quinone oxidoreductase subunit I 2.